Reading from the N-terminus, the 807-residue chain is Glycerol-3-phosphate acyltransferase (807 aa).

The short motif at 308–313 is the HXXXXD motif element; it reads CHRSHM.

It belongs to the GPAT/DAPAT family.

It localises to the cell inner membrane. The catalysed reaction is sn-glycerol 3-phosphate + an acyl-CoA = a 1-acyl-sn-glycero-3-phosphate + CoA. It functions in the pathway phospholipid metabolism; CDP-diacylglycerol biosynthesis; CDP-diacylglycerol from sn-glycerol 3-phosphate: step 1/3. This Shewanella denitrificans (strain OS217 / ATCC BAA-1090 / DSM 15013) protein is Glycerol-3-phosphate acyltransferase.